The following is an 881-amino-acid chain: Band 4.1-like protein 1 (881 aa).

N-acetylmethionine is present on Met1. Residues 1–88 (MTTETGPDSE…TPSKAQKSPQ (88 aa)) are disordered. Residues 17–35 (EAPQQPEAAAAVTTPVTPA) show a composition bias toward low complexity. Thr30 bears the Phosphothreonine mark. The segment covering 38-50 (GHPEANSNEKHPS) has biased composition (basic and acidic residues). Position 75 is a phosphoserine (Ser75). The segment covering 76–87 (ERTTPSKAQKSP) has biased composition (polar residues). At Thr79 the chain carries Phosphothreonine. The FERM domain maps to 97–378 (AICRVTLLDA…EHHTFFRLVS (282 aa)). Tyr343 carries the phosphotyrosine modification. Ser378, Ser430, and Ser437 each carry phosphoserine. The tract at residues 428–501 (SRSLDGAEFS…HKQEFLDKPE (74 aa)) is disordered. Residues 444 to 457 (ENHDAGPDGDKRDE) are compositionally biased toward basic and acidic residues. Phosphoserine is present on residues Ser461 and Ser466. Residues 466–501 (SEAEEGEVRTPTKIKELKPEQETTPRHKQEFLDKPE) show a composition bias toward basic and acidic residues. Residue Thr475 is modified to Phosphothreonine. Positions 483–541 (KPEQETTPRHKQEFLDKPEDVLLKHQASINELKRTLKEPNSKLIHRDRDWERERRLPSS) are spectrin--actin-binding. Ser510 carries the post-translational modification Phosphoserine. The segment covering 514-538 (LKRTLKEPNSKLIHRDRDWERERRL) has biased composition (basic and acidic residues). Residues 514–596 (LKRTLKEPNS…QERDTVFLKD (83 aa)) form a disordered region. Phosphoserine is present on residues Ser540, Ser541, Ser544, and Ser546. Thr550 is subject to Phosphothreonine. Basic and acidic residues predominate over residues 550-577 (TPEKANERAGLREGSEEKVKPPRPRAPE). A phosphoserine mark is found at Ser564 and Ser578. Position 580 is a phosphothreonine (Thr580). Phosphoserine is present on residues Ser639, Ser648, Ser650, Ser667, Ser672, Ser678, and Ser685. Residues 642-699 (ELDRDKSDSDTEGLLFSRDLNKGAPSQDDESGGIEDSPDRGACSTPDMPQFEPVKTET) form a disordered region. Thr686 carries the phosphothreonine modification. Ser722, Ser784, and Ser870 each carry phosphoserine. The C-terminal (CTD) stretch occupies residues 746 to 881 (SITTETISTT…EERDKKPQES (136 aa)).

Interacts with AGAP2. Highest expression in brain, lower in heart, kidney, pancreas, placenta, lung and skeletal muscle.

It localises to the cytoplasm. The protein localises to the cytoskeleton. Its function is as follows. May function to confer stability and plasticity to neuronal membrane via multiple interactions, including the spectrin-actin-based cytoskeleton, integral membrane channels and membrane-associated guanylate kinases. The polypeptide is Band 4.1-like protein 1 (Homo sapiens (Human)).